A 29-amino-acid chain; its full sequence is Brevinin-2Rc (29 aa).

A disulfide bridge links Cys23 with Cys29.

As to expression, expressed by the skin glands.

The protein localises to the secreted. In terms of biological role, antimicrobial peptide. The chain is Brevinin-2Rc from Pelophylax ridibundus (Marsh frog).